Reading from the N-terminus, the 396-residue chain is Tryptophan synthase beta chain (396 aa).

N6-(pyridoxal phosphate)lysine is present on K86.

The protein belongs to the TrpB family. Tetramer of two alpha and two beta chains. Pyridoxal 5'-phosphate serves as cofactor.

The catalysed reaction is (1S,2R)-1-C-(indol-3-yl)glycerol 3-phosphate + L-serine = D-glyceraldehyde 3-phosphate + L-tryptophan + H2O. The protein operates within amino-acid biosynthesis; L-tryptophan biosynthesis; L-tryptophan from chorismate: step 5/5. In terms of biological role, the beta subunit is responsible for the synthesis of L-tryptophan from indole and L-serine. This is Tryptophan synthase beta chain from Proteus mirabilis (strain HI4320).